The following is a 119-amino-acid chain: Beta-2-microglobulin (119 aa).

An N-terminal signal peptide occupies residues 1–20 (MARLVVVALLVLLCLSGLEA). The 90-residue stretch at 25 to 114 (PKIQVYSRHP…VTFTAPKTVK (90 aa)) folds into the Ig-like C1-type domain. Cys-45 and Cys-100 are joined by a disulfide.

Belongs to the beta-2-microglobulin family. In terms of assembly, heterodimer of an alpha chain and a beta chain. Beta-2-microglobulin is the beta-chain of major histocompatibility complex class I molecules.

The protein resides in the secreted. Functionally, component of the class I major histocompatibility complex (MHC). Involved in the presentation of peptide antigens to the immune system. The sequence is that of Beta-2-microglobulin (B2M) from Chiropotes satanas (Brown-bearded saki).